The following is a 308-amino-acid chain: Aspartate carbamoyltransferase catalytic subunit (308 aa).

Arginine 59 and threonine 60 together coordinate carbamoyl phosphate. Lysine 87 lines the L-aspartate pocket. Carbamoyl phosphate is bound by residues arginine 109, histidine 137, and glutamine 140. 2 residues coordinate L-aspartate: arginine 170 and arginine 224. Residues glycine 265 and proline 266 each contribute to the carbamoyl phosphate site.

This sequence belongs to the aspartate/ornithine carbamoyltransferase superfamily. ATCase family. In terms of assembly, heterododecamer (2C3:3R2) of six catalytic PyrB chains organized as two trimers (C3), and six regulatory PyrI chains organized as three dimers (R2).

It catalyses the reaction carbamoyl phosphate + L-aspartate = N-carbamoyl-L-aspartate + phosphate + H(+). It participates in pyrimidine metabolism; UMP biosynthesis via de novo pathway; (S)-dihydroorotate from bicarbonate: step 2/3. Its function is as follows. Catalyzes the condensation of carbamoyl phosphate and aspartate to form carbamoyl aspartate and inorganic phosphate, the committed step in the de novo pyrimidine nucleotide biosynthesis pathway. This Flavobacterium psychrophilum (strain ATCC 49511 / DSM 21280 / CIP 103535 / JIP02/86) protein is Aspartate carbamoyltransferase catalytic subunit.